Reading from the N-terminus, the 47-residue chain is Delta-stichotoxin-Hcr1d (47 aa).

3 disulfide bridges follow: Cys-3–Cys-43, Cys-5–Cys-33, and Cys-26–Cys-44.

This sequence belongs to the sea anemone sodium channel inhibitory toxin family. Type II subfamily.

The protein resides in the secreted. It is found in the nematocyst. Binds to site 3 of voltage-gated sodium channels and inhibits the inactivation process. This Radianthus crispa (Leathery sea anemone) protein is Delta-stichotoxin-Hcr1d.